Reading from the N-terminus, the 223-residue chain is Ribonuclease HII (223 aa).

Residues 32–223 (FHIAGVDEVG…LKGRFRDNMS (192 aa)) form the RNase H type-2 domain. A divalent metal cation is bound by residues Asp-38, Glu-39, and Asp-130.

The protein belongs to the RNase HII family. It depends on Mn(2+) as a cofactor. Mg(2+) serves as cofactor.

The protein localises to the cytoplasm. It catalyses the reaction Endonucleolytic cleavage to 5'-phosphomonoester.. Its function is as follows. Endonuclease that specifically degrades the RNA of RNA-DNA hybrids. The polypeptide is Ribonuclease HII (Bartonella quintana (strain Toulouse) (Rochalimaea quintana)).